A 654-amino-acid chain; its full sequence is Coiled-coil domain-containing protein 81 (654 aa).

Positions 196-270 (SRESYRKRPN…RERQSISPAK (75 aa)) are disordered. S206 carries the phosphoserine modification. 2 stretches are compositionally biased toward basic and acidic residues: residues 212–222 (RIEHKETENKT) and 232–251 (GENR…EGGA). 4 positions are modified to phosphoserine: S273, S275, S296, and S419. The segment covering 293 to 302 (ENLSSPGCQR) has biased composition (polar residues). Residues 293–318 (ENLSSPGCQRNDNERPRTSPAPACQD) are disordered. The stretch at 431 to 562 (SQSLLKQMES…QRRDLQMLQR (132 aa)) forms a coiled coil.

The protein resides in the cytoplasm. It is found in the cytoskeleton. Its subcellular location is the microtubule organizing center. The protein localises to the centrosome. The polypeptide is Coiled-coil domain-containing protein 81 (Ccdc81) (Mus musculus (Mouse)).